The chain runs to 308 residues: Cytochrome b (308 aa).

A run of 4 helical transmembrane segments spans residues 1–21 (FGSLLGICLMTQIITGLLMAM), 45–66 (WLIRNLHANGASMFFICIYLHI), 81–101 (WNTGVILLLTLMATAFVGYVL), and 146–166 (FFALHFLLPFMIAGLTFIHLT). Residues His51 and His65 each coordinate heme b. The heme b site is built by His150 and His164. His169 contacts a ubiquinone. 3 helical membrane passes run 194–214 (TKDILGFLAMLVPLTALAMFS), 256–276 (LGGVLALAASVLILFLIPFLH), and 288–308 (LSQLLFWILVTNLLILTWVGS).

The protein belongs to the cytochrome b family. The cytochrome bc1 complex contains 11 subunits: 3 respiratory subunits (MT-CYB, CYC1 and UQCRFS1), 2 core proteins (UQCRC1 and UQCRC2) and 6 low-molecular weight proteins (UQCRH/QCR6, UQCRB/QCR7, UQCRQ/QCR8, UQCR10/QCR9, UQCR11/QCR10 and a cleavage product of UQCRFS1). This cytochrome bc1 complex then forms a dimer. It depends on heme b as a cofactor.

It localises to the mitochondrion inner membrane. In terms of biological role, component of the ubiquinol-cytochrome c reductase complex (complex III or cytochrome b-c1 complex) that is part of the mitochondrial respiratory chain. The b-c1 complex mediates electron transfer from ubiquinol to cytochrome c. Contributes to the generation of a proton gradient across the mitochondrial membrane that is then used for ATP synthesis. The sequence is that of Cytochrome b (MT-CYB) from Asthenes dorbignyi (Creamy-breasted canastero).